Consider the following 340-residue polypeptide: Ketol-acid reductoisomerase (NADP(+)) (340 aa).

One can recognise a KARI N-terminal Rossmann domain in the interval 3–183 (LPIYYDKDCD…GGGRTGIIHT (181 aa)). Residues 26 to 29 (FGSQ), Ser54, and 84 to 87 (DEIQ) each bind NADP(+). His109 is an active-site residue. An NADP(+)-binding site is contributed by Gly135. In terms of domain architecture, KARI C-terminal knotted spans 184–329 (TFKDETETDL…KRLRAMMPWI (146 aa)). Mg(2+)-binding residues include Asp192, Glu196, Glu228, and Glu232. Ser253 contacts substrate.

The protein belongs to the ketol-acid reductoisomerase family. The cofactor is Mg(2+).

It catalyses the reaction (2R)-2,3-dihydroxy-3-methylbutanoate + NADP(+) = (2S)-2-acetolactate + NADPH + H(+). The enzyme catalyses (2R,3R)-2,3-dihydroxy-3-methylpentanoate + NADP(+) = (S)-2-ethyl-2-hydroxy-3-oxobutanoate + NADPH + H(+). It participates in amino-acid biosynthesis; L-isoleucine biosynthesis; L-isoleucine from 2-oxobutanoate: step 2/4. Its pathway is amino-acid biosynthesis; L-valine biosynthesis; L-valine from pyruvate: step 2/4. In terms of biological role, involved in the biosynthesis of branched-chain amino acids (BCAA). Catalyzes an alkyl-migration followed by a ketol-acid reduction of (S)-2-acetolactate (S2AL) to yield (R)-2,3-dihydroxy-isovalerate. In the isomerase reaction, S2AL is rearranged via a Mg-dependent methyl migration to produce 3-hydroxy-3-methyl-2-ketobutyrate (HMKB). In the reductase reaction, this 2-ketoacid undergoes a metal-dependent reduction by NADPH to yield (R)-2,3-dihydroxy-isovalerate. This Nitratiruptor sp. (strain SB155-2) protein is Ketol-acid reductoisomerase (NADP(+)).